The sequence spans 342 residues: MTQAVDIGTIQTLIRLEVPDQVPLTGSIPYDALVKKLKTPVDPELLQRLIRFTRLVGFLDEDAEGAVKHSPMSAIFVNDPDTAGQARFMADFGIRPCSFIYESIKLDPSGEAARQGPLALMAREPGAREGPTFFEVLEKDPVNRKRWHDGMAVHNDSMVRHVAGAYDWGTVQSLVDIGGSEGHVAAVIVNAFPHIQITVQDRPEIIEKARQRGDRHPNIIFEEHDFFTPQPRIADAYFLRLILHDWNDADCTRIVRQISSALRPGARLLIMDAVLPEPGEGSLQSERRLRRSDIGMYTLFSAKERSLAQMRRLVEDCDSRLRFEKLYTPPGSHASMLSWICE.

S-adenosyl-L-methionine is bound at residue D201. H244 (proton acceptor) is an active-site residue.

The protein belongs to the class I-like SAM-binding methyltransferase superfamily. Cation-independent O-methyltransferase family. Homodimer.

It catalyses the reaction 6-hydroxytryprostatin B + S-adenosyl-L-methionine = tryprostatin A + S-adenosyl-L-homocysteine + H(+). The protein operates within alkaloid biosynthesis. Its function is as follows. 6-hydroxytryprostatin B O-methyltransferase; part of the gene cluster that mediates the biosynthesis of fumitremorgins, indole alkaloids that carry not only intriguing chemical structures, but also interesting biological and pharmacological activities. The biosynthesis of fumitremorgin-type alkaloids begins by condensation of the two amino acids L-tryptophan and L-proline to brevianamide F, catalyzed by the non-ribosomal peptide synthetase ftmA. Brevianamide F is then prenylated by the prenyltransferase ftmPT1/ftmB in the presence of dimethylallyl diphosphate, resulting in the formation of tryprostatin B. The three cytochrome P450 monooxygenases, ftmP450-1/ftmC, ftmP450-2/ftmE and ftmP450-3/FtmG, are responsible for the conversion of tryprostatin B to 6-hydroxytryprostatin B, tryprostatin A to fumitremorgin C and fumitremorgin C to 12,13-dihydroxyfumitremorgin C, respectively. The putative methyltransferase ftmMT/ftmD is expected for the conversion of 6-hydroxytryprostatin B to tryprostatin A. FtmPT2/FtmH catalyzes the prenylation of 12,13-dihydroxyfumitre-morgin C in the presence of dimethylallyl diphosphate, resulting in the formation of fumitremorgin B. Fumitremorgin B is further converted to verruculogen by ftmOx1/ftmF via the insertion of an endoperoxide bond between the two prenyl moieties. In some fungal species, verruculogen is further converted to fumitremorgin A, but the enzymes involved in this step have not been identified yet. In Aspergillus fumigatus (Neosartorya fumigata), this protein is 6-hydroxytryprostatin B O-methyltransferase.